A 768-amino-acid chain; its full sequence is Phosphoribosylformylglycinamidine synthase subunit PurL (768 aa).

The active site involves histidine 53. Tyrosine 56 provides a ligand contact to ATP. Position 98 (glutamate 98) interacts with Mg(2+). Substrate-binding positions include serine 99 to histidine 102 and arginine 121. The active-site Proton acceptor is histidine 100. Aspartate 122 serves as a coordination point for Mg(2+). Glutamine 253 provides a ligand contact to substrate. Residue aspartate 285 coordinates Mg(2+). Substrate is bound at residue glutamate 328 to glutamine 330. Aspartate 516 and glycine 561 together coordinate ATP. Mg(2+) is bound at residue asparagine 562. Serine 564 contacts substrate.

The protein belongs to the FGAMS family. As to quaternary structure, monomer. Part of the FGAM synthase complex composed of 1 PurL, 1 PurQ and 2 PurS subunits.

The protein localises to the cytoplasm. The enzyme catalyses N(2)-formyl-N(1)-(5-phospho-beta-D-ribosyl)glycinamide + L-glutamine + ATP + H2O = 2-formamido-N(1)-(5-O-phospho-beta-D-ribosyl)acetamidine + L-glutamate + ADP + phosphate + H(+). Its pathway is purine metabolism; IMP biosynthesis via de novo pathway; 5-amino-1-(5-phospho-D-ribosyl)imidazole from N(2)-formyl-N(1)-(5-phospho-D-ribosyl)glycinamide: step 1/2. In terms of biological role, part of the phosphoribosylformylglycinamidine synthase complex involved in the purines biosynthetic pathway. Catalyzes the ATP-dependent conversion of formylglycinamide ribonucleotide (FGAR) and glutamine to yield formylglycinamidine ribonucleotide (FGAM) and glutamate. The FGAM synthase complex is composed of three subunits. PurQ produces an ammonia molecule by converting glutamine to glutamate. PurL transfers the ammonia molecule to FGAR to form FGAM in an ATP-dependent manner. PurS interacts with PurQ and PurL and is thought to assist in the transfer of the ammonia molecule from PurQ to PurL. The polypeptide is Phosphoribosylformylglycinamidine synthase subunit PurL (Methanothrix thermoacetophila (strain DSM 6194 / JCM 14653 / NBRC 101360 / PT) (Methanosaeta thermophila)).